Here is an 878-residue protein sequence, read N- to C-terminus: Alanine--tRNA ligase (878 aa).

Positions 566, 570, 668, and 672 each coordinate Zn(2+).

The protein belongs to the class-II aminoacyl-tRNA synthetase family. Zn(2+) is required as a cofactor.

The protein localises to the cytoplasm. It catalyses the reaction tRNA(Ala) + L-alanine + ATP = L-alanyl-tRNA(Ala) + AMP + diphosphate. Catalyzes the attachment of alanine to tRNA(Ala) in a two-step reaction: alanine is first activated by ATP to form Ala-AMP and then transferred to the acceptor end of tRNA(Ala). Also edits incorrectly charged Ser-tRNA(Ala) and Gly-tRNA(Ala) via its editing domain. In Bacillus subtilis (strain 168), this protein is Alanine--tRNA ligase.